The primary structure comprises 1020 residues: Probable beta-galactosidase B (1020 aa).

The first 22 residues, 1–22, serve as a signal peptide directing secretion; the sequence is MLISKTVLSGLALGASFVGVSA. N25 carries an N-linked (GlcNAc...) asparagine glycan. Y90 contributes to the substrate binding site. A glycan (N-linked (GlcNAc...) asparagine) is linked at N111. N135, A136, and E137 together coordinate substrate. N172 is a glycosylation site (N-linked (GlcNAc...) asparagine). Residue N195 coordinates substrate. E196 serves as the catalytic Proton donor. Residues N210 and N251 are each glycosylated (N-linked (GlcNAc...) asparagine). A substrate-binding site is contributed by Y264. C270 and C323 are disulfide-bonded. The N-linked (GlcNAc...) asparagine glycan is linked to N271. The active-site Nucleophile is the E307. Y372 lines the substrate pocket. Residues N410, N455, N549, N596, N625, N702, N747, N785, N819, N880, and N919 are each glycosylated (N-linked (GlcNAc...) asparagine).

It belongs to the glycosyl hydrolase 35 family.

The protein localises to the secreted. The enzyme catalyses Hydrolysis of terminal non-reducing beta-D-galactose residues in beta-D-galactosides.. Cleaves beta-linked terminal galactosyl residues from gangliosides, glycoproteins, and glycosaminoglycans. This is Probable beta-galactosidase B (lacB) from Aspergillus flavus (strain ATCC 200026 / FGSC A1120 / IAM 13836 / NRRL 3357 / JCM 12722 / SRRC 167).